The following is a 584-amino-acid chain: Arginine--tRNA ligase (584 aa).

The 'HIGH' region motif lies at 127–137 (PNLAKEMHVGH).

This sequence belongs to the class-I aminoacyl-tRNA synthetase family. As to quaternary structure, monomer.

The protein localises to the cytoplasm. It catalyses the reaction tRNA(Arg) + L-arginine + ATP = L-arginyl-tRNA(Arg) + AMP + diphosphate. The polypeptide is Arginine--tRNA ligase (Alcanivorax borkumensis (strain ATCC 700651 / DSM 11573 / NCIMB 13689 / SK2)).